The following is a 533-amino-acid chain: 2,3-bisphosphoglycerate-independent phosphoglycerate mutase (533 aa).

Mn(2+) is bound by residues aspartate 15 and serine 65. Serine 65 serves as the catalytic Phosphoserine intermediate. Substrate-binding positions include histidine 126, 156–157 (RD), arginine 188, arginine 194, 258–261 (RPDR), and lysine 331. 5 residues coordinate Mn(2+): aspartate 398, histidine 402, aspartate 439, histidine 440, and histidine 457.

The protein belongs to the BPG-independent phosphoglycerate mutase family. As to quaternary structure, monomer. Requires Mn(2+) as cofactor.

It carries out the reaction (2R)-2-phosphoglycerate = (2R)-3-phosphoglycerate. The protein operates within carbohydrate degradation; glycolysis; pyruvate from D-glyceraldehyde 3-phosphate: step 3/5. Its function is as follows. Catalyzes the interconversion of 2-phosphoglycerate and 3-phosphoglycerate. This is 2,3-bisphosphoglycerate-independent phosphoglycerate mutase from Nostoc sp. (strain PCC 7120 / SAG 25.82 / UTEX 2576).